Here is a 618-residue protein sequence, read N- to C-terminus: Serine/threonine-protein kinase pkn1 (618 aa).

One can recognise a Protein kinase domain in the interval 15 to 381 (YKILCYLRKG…KEEVKPQPLF (367 aa)). Residues 21–29 (LRKGLWCQD) and lysine 44 contribute to the ATP site.

It belongs to the protein kinase superfamily. Ser/Thr protein kinase family. In terms of processing, autophosphorylated on serine and threonine residues.

The catalysed reaction is L-seryl-[protein] + ATP = O-phospho-L-seryl-[protein] + ADP + H(+). It carries out the reaction L-threonyl-[protein] + ATP = O-phospho-L-threonyl-[protein] + ADP + H(+). Its function is as follows. Together with the serine/threonine kinase PknD, may play a role in the specific interactions with host proteins during intracellular growth. This Chlamydia caviae (strain ATCC VR-813 / DSM 19441 / 03DC25 / GPIC) (Chlamydophila caviae) protein is Serine/threonine-protein kinase pkn1 (pkn1).